A 361-amino-acid polypeptide reads, in one-letter code: MNKSRVVVGMSGGVDSSVAALLLKQQGYDVIGLFMKNWEDDDTDEYCSSRKDFLDAASVADILDIPLEAVNFSAEYRERVFSLFLAEYQAGRTPNPDVLCNSEIKFKAFLDHALALGADWIATGHYAQVHEINGQFQLLKGEDGNKDQSYFLYRLNQQQLSRTIFPIGHLYKREVRKIAHKHGLPNSTKKDSTGICFIGERPFREFLNRYLPVDPGEIHTLDGQIVGEHQGLMYYTIGQRQGLGIGGIREGSEQPWFVSGKDMQTNVLYVVQGHDHPALLRSSLTAADLSWISGAPPHQSWVYAAKIRYRQTDAPCAIIRLEHDSCQIGFAAPQWGVTPGQSVVIYESKVCLGGGIITDSV.

ATP-binding positions include 9–16 and Met-35; that span reads GMSGGVDS. The segment at 95–97 is interaction with target base in tRNA; it reads NPD. Cys-100 functions as the Nucleophile in the catalytic mechanism. A disulfide bridge connects residues Cys-100 and Cys-196. Gly-124 serves as a coordination point for ATP. Residues 146–148 form an interaction with tRNA region; sequence KDQ. Residue Cys-196 is the Cysteine persulfide intermediate of the active site. The interaction with tRNA stretch occupies residues 308 to 309; sequence RY.

This sequence belongs to the MnmA/TRMU family.

Its subcellular location is the cytoplasm. The catalysed reaction is S-sulfanyl-L-cysteinyl-[protein] + uridine(34) in tRNA + AH2 + ATP = 2-thiouridine(34) in tRNA + L-cysteinyl-[protein] + A + AMP + diphosphate + H(+). Catalyzes the 2-thiolation of uridine at the wobble position (U34) of tRNA, leading to the formation of s(2)U34. In Nitrosomonas eutropha (strain DSM 101675 / C91 / Nm57), this protein is tRNA-specific 2-thiouridylase MnmA.